A 423-amino-acid polypeptide reads, in one-letter code: Glutamyl-tRNA reductase (423 aa).

Substrate-binding positions include 49–52, S106, 111–113, and Q117; these read TCNR and EPQ. C50 (nucleophile) is an active-site residue. NADP(+) is bound at residue 186–191; it reads GAGDTS.

This sequence belongs to the glutamyl-tRNA reductase family. As to quaternary structure, homodimer.

The enzyme catalyses (S)-4-amino-5-oxopentanoate + tRNA(Glu) + NADP(+) = L-glutamyl-tRNA(Glu) + NADPH + H(+). Its pathway is porphyrin-containing compound metabolism; protoporphyrin-IX biosynthesis; 5-aminolevulinate from L-glutamyl-tRNA(Glu): step 1/2. Its function is as follows. Catalyzes the NADPH-dependent reduction of glutamyl-tRNA(Glu) to glutamate 1-semialdehyde (GSA). This chain is Glutamyl-tRNA reductase, found in Idiomarina loihiensis (strain ATCC BAA-735 / DSM 15497 / L2-TR).